We begin with the raw amino-acid sequence, 3291 residues long: Protocadherin-16 (3291 aa).

The signal sequence occupies residues 1-35; the sequence is MQKELSVALSCPGMKSLRTLLPLLVLLGATVPGSW. Residues 36–2933 lie on the Extracellular side of the membrane; the sequence is GQAGSLDLQI…PDLNLLLVGA (2898 aa). Cadherin domains follow at residues 37–137, 138–249, 250–356, 369–466, 476–572, 573–679, 680–784, 785–888, 889–994, 995–1105, 1100–1205, 1218–1317, 1326–1429, 1430–1539, 1539–1642, 1643–1744, 1745–1848, 1849–1953, 1976–2061, 2062–2164, 2165–2270, 2270–2369, 2370–2475, 2476–2595, 2596–2699, 2700–2806, and 2807–2926; these read QAGS…APAF, PQAR…APAF, NQSR…QPSM, VSEA…APAF, LPEV…EPQF, QRTF…PPQF, YPRE…PPIF, EQLQ…SPAF, PAPE…APRF, DSPT…EPTF, SEEP…SPTF, IQVP…SPDL, VPVV…APTF, ARDP…APVF, FASP…APAF, PQQE…TPTF, GNTH…APVF, PVPS…APAF, LATL…GPRF, PRTS…APRF, LRPH…RPTI, IPQP…VPTF, SQSL…APSF, TLPH…PPVF, TRAS…GPAF, PLSL…DPVF, and LAPS…APDL. Asn396 is a glycosylation site (N-linked (GlcNAc...) asparagine). Residue Asn2354 is glycosylated (N-linked (GlcNAc...) asparagine). Residues 2867–2886 form a disordered region; the sequence is SRAPGSGTTTSGGGGRTRRE. A helical transmembrane segment spans residues 2934–2954; that stretch reads VAASLGVVVVLALAALVLGLV. Residues 2955-3291 lie on the Cytoplasmic side of the membrane; sequence RARSRKAEAA…EPPDDTELRI (337 aa). Positions 2978-3033 are disordered; the sequence is SLQKLGREPPSPPPSEHLYHQTLPSYGGPGAGGPYPRGGSLDPSHSSGRGSAEAAE. Gly residues predominate over residues 3004 to 3013; that stretch reads GGPGAGGPYP. The residue at position 3048 (Ser3048) is a Phosphoserine. 2 disordered regions span residues 3051-3081 and 3226-3291; these read SSLAARGPDSGIQQDADGLSDTSCEPPAPDT and ASHR…ELRI. Residues 3237-3259 are compositionally biased toward low complexity; it reads SLSSAAMSPSFSPSLSPLAARSP. The segment covering 3270-3279 has biased composition (polar residues); sequence PSASALSTES.

In terms of assembly, heterophilic interaction with FAT4; this interaction affects their respective protein levels. As to expression, expressed in the epicardium and atrioventricular sulcus (at protein level).

The protein resides in the cell membrane. Its function is as follows. Calcium-dependent cell-adhesion protein. Mediates functions in neuroprogenitor cell proliferation and differentiation. In the heart, has a critical role for proper morphogenesis of the mitral valve, acting in the regulation of cell migration involved in valve formation. The polypeptide is Protocadherin-16 (Dchs1) (Mus musculus (Mouse)).